We begin with the raw amino-acid sequence, 671 residues long: Replication protein A 70 kDa DNA-binding subunit (671 aa).

Disordered stretches follow at residues 143–166 (QVSQ…PAVN) and 190–219 (MNKT…LQIS). The span at 199-213 (NNNNNNNNNGNNKNN) shows a compositional bias: low complexity. The OB DNA-binding region spans 240 to 322 (QTIKVRITKK…NKGDHTVTVN (83 aa)). The segment at 530-549 (CFSCKKKIARNNEVWTCINC) adopts a C4-type zinc-finger fold.

The protein belongs to the replication factor A protein 1 family. As to quaternary structure, component of the replication protein A complex (RPA), a heterotrimeric complex composed of RPA1, RPA2/TEB2 and RPA3/TEB3.

As part of the heterotrimeric replication protein A (RPA) complex, binds and stabilizes single-stranded DNA intermediates, that form during DNA replication or upon DNA stress. It prevents their reannealing and in parallel, recruits and activates different proteins and complexes involved in DNA metabolism. Thereby, it plays an essential role both in DNA replication and the cellular response to DNA damage. In the cellular response to DNA damage, the RPA complex controls DNA repair and DNA damage checkpoint activation. The protein is Replication protein A 70 kDa DNA-binding subunit of Tetrahymena thermophila (strain SB210).